The primary structure comprises 1734 residues: Complement C4-A (1734 aa).

The first 19 residues, 1 to 19 (MRLLWGLAWVFSFCASSLQ), serve as a signal peptide directing secretion. The cysteines at positions 66 and 95 are disulfide-linked. The N-linked (GlcNAc...) asparagine glycan is linked to Asn224. Residues Cys633 and Cys667 are joined by a disulfide bond. Residues 674–677 (RQKR) constitute a propeptide that is removed on maturation. Intrachain disulfides connect Cys700/Cys726, Cys701/Cys733, and Cys714/Cys734. Positions 700-734 (CCQDGMTKLPMKRTCEQRAARVPQQACREPFLSCC) constitute an Anaphylatoxin-like domain. N-linked (GlcNAc...) asparagine glycans are attached at residues Asn743 and Asn859. The segment at residues 1002–1005 (CAEQ) is a cross-link (isoglutamyl cysteine thioester (Cys-Gln)). N-linked (GlcNAc...) asparagine glycosylation is found at Asn1128 and Asn1383. At Tyr1409 the chain carries Sulfotyrosine. The propeptide occupies 1437-1443 (RRSRRRR). 5 disulfides stabilise this stretch: Cys1461–Cys1525, Cys1573–Cys1578, Cys1585–Cys1663, Cys1608–Cys1732, and Cys1708–Cys1717. Positions 1585 to 1732 (CPRLLRSLER…FLMEFSSRGC (148 aa)) constitute an NTR domain.

In absence of complement activation, circulates in blood as a disulfide-linked trimer of an alpha, beta and gamma chain. As to quaternary structure, complement C4b is composed of Complement C4b-A, Complement C4 beta and Complement C4 gamma chains that are associated via disulfide bonds. Non-enzymatic component of the C3 convertase, also named C4bC2b, composed of the serine protease complement C2b (C2), as well as complement C4b. Non-enzymatic component of the C5 convertase, also named C4bC2bC3b, composed of the serine protease complement C2b (C2), complement C3b, as well as complement C4b. In terms of processing, prior to secretion, the single-chain precursor is enzymatically cleaved by plasminogen (PLG) to yield non-identical chains alpha, beta and gamma. During activation of the complement systems, the alpha chain is cleaved into C4a and C4b by different proteases depending on the complement pathway: C4b stays linked to the beta and gamma chains, while C4a is released in the plasma. The alpha chain is cleaved by C1S to generate C4a and C4b following activation by the classical complement system. The alpha chain is cleaved to generate C4a and C4b by MASP2 following activation by the lectin complement system. The alpha chain is cleaved by GZMK to generate C4a and C4b following activation by the GZMK complement system. Further degradation of C4b by C1 into the inactive fragments C4c and C4d blocks the generation of C3 convertase. The proteolytic cleavages often are incomplete so that many structural forms can be found in plasma. Upon activation, the internal thioester bond reacts with carbohydrate antigens on the target surface to form amide or ester bonds, leading to covalent association with the surface of pathogens. Post-translationally, complement C4b interacts with complement C3b via a thioester linkage. In terms of processing, N- and O-glycosylated. O-glycosylated with a core 1 or possibly core 8 glycan.

It localises to the secreted. The protein localises to the synapse. It is found in the cell projection. The protein resides in the axon. Its subcellular location is the dendrite. It localises to the cell surface. Specifically inhibited by nanobody hC4Nb8, inhibiting the classical complement pathway. Precursor of non-enzymatic components of the classical, lectin and GZMK complement pathways, which consist in a cascade of proteins that leads to phagocytosis and breakdown of pathogens and signaling that strengthens the adaptive immune system. In terms of biological role, non-enzymatic component of C3 and C5 convertases. Generated following cleavage by complement proteases (C1S, MASP2 or GZMK, depending on the complement pathway), it covalently attaches to the surface of pathogens, where it acts as an opsonin that marks the surface of antigens for removal. It then recruits the serine protease complement C2b to form the C3 and C5 convertases, which cleave and activate C3 and C5, respectively, the next components of the complement pathways. Complement C4b-A isotype is responsible for effective binding to form amide bonds with immune aggregates or protein antigens, while complement C4b-B isotype catalyzes the transacylation of the thioester carbonyl group to form ester bonds with carbohydrate antigens. Functionally, putative humoral mediator released following cleavage by complement proteases (C1S, MASP2 or GZMK, depending on the complement pathway). While it is strongly similar to anaphylatoxins, its role is unclear. Was reported to act as a mediator of local inflammatory process; however these effects were probably due to contamination with C3a and/C5a anaphylatoxins in biological assays. In Mus musculus (Mouse), this protein is Complement C4-A.